The following is a 340-amino-acid chain: Glycerol-3-phosphate dehydrogenase [NAD(P)+] (340 aa).

Residues serine 12, tryptophan 13, lysine 34, and lysine 107 each coordinate NADPH. Residues lysine 107, glycine 138, and serine 140 each contribute to the sn-glycerol 3-phosphate site. Position 142 (alanine 142) interacts with NADPH. Positions 193, 246, 256, 257, and 258 each coordinate sn-glycerol 3-phosphate. The active-site Proton acceptor is lysine 193. Arginine 257 contacts NADPH. Residues isoleucine 281 and glutamate 283 each coordinate NADPH.

Belongs to the NAD-dependent glycerol-3-phosphate dehydrogenase family.

Its subcellular location is the cytoplasm. It catalyses the reaction sn-glycerol 3-phosphate + NAD(+) = dihydroxyacetone phosphate + NADH + H(+). The catalysed reaction is sn-glycerol 3-phosphate + NADP(+) = dihydroxyacetone phosphate + NADPH + H(+). Its pathway is membrane lipid metabolism; glycerophospholipid metabolism. Its function is as follows. Catalyzes the reduction of the glycolytic intermediate dihydroxyacetone phosphate (DHAP) to sn-glycerol 3-phosphate (G3P), the key precursor for phospholipid synthesis. In Enterococcus faecalis (strain ATCC 700802 / V583), this protein is Glycerol-3-phosphate dehydrogenase [NAD(P)+].